A 154-amino-acid chain; its full sequence is Urease subunit alpha (154 aa).

Residues 38–154 form the Urease domain; it reads GGIDTHIHFI…ADEMDIQVAI (117 aa). Ni(2+) contacts are provided by histidine 43, histidine 45, and lysine 126. Position 126 is an N6-carboxylysine (lysine 126). A substrate-binding site is contributed by histidine 128.

This sequence belongs to the metallo-dependent hydrolases superfamily. Urease alpha subunit family. As to quaternary structure, heterotrimer of UreA (gamma), UreB (beta) and UreC (alpha) subunits. Three heterotrimers associate to form the active enzyme. Requires Ni cation as cofactor. In terms of processing, carboxylation allows a single lysine to coordinate two nickel ions.

It is found in the cytoplasm. It catalyses the reaction urea + 2 H2O + H(+) = hydrogencarbonate + 2 NH4(+). It functions in the pathway nitrogen metabolism; urea degradation; CO(2) and NH(3) from urea (urease route): step 1/1. In Photobacterium damselae subsp. damselae (Listonella damsela), this protein is Urease subunit alpha (ureC).